The chain runs to 186 residues: Ribosome-recycling factor (186 aa).

The protein belongs to the RRF family.

Its subcellular location is the cytoplasm. In terms of biological role, responsible for the release of ribosomes from messenger RNA at the termination of protein biosynthesis. May increase the efficiency of translation by recycling ribosomes from one round of translation to another. In Porphyromonas gingivalis (strain ATCC BAA-308 / W83), this protein is Ribosome-recycling factor.